We begin with the raw amino-acid sequence, 533 residues long: Beta-glucosidase 22 (533 aa).

An N-terminal signal peptide occupies residues 1–24; that stretch reads MAVSSSTSTCSSFSLLLLLLLLAA. Asn41 carries an N-linked (GlcNAc...) asparagine glycan. A beta-D-glucoside contacts are provided by residues Gln61, His161, and 206–207; that span reads DE. Glu207 (proton donor) is an active-site residue. Cysteines 226 and 234 form a disulfide. Residues Asn233 and Asn238 are each glycosylated (N-linked (GlcNAc...) asparagine). Tyr350 and Glu421 together coordinate a beta-D-glucoside. The Nucleophile role is filled by Glu421. N-linked (GlcNAc...) asparagine glycosylation is present at Asn435. Trp466 and Phe482 together coordinate a beta-D-glucoside.

This sequence belongs to the glycosyl hydrolase 1 family.

It catalyses the reaction Hydrolysis of terminal, non-reducing beta-D-glucosyl residues with release of beta-D-glucose.. The polypeptide is Beta-glucosidase 22 (BGLU22) (Oryza sativa subsp. japonica (Rice)).